The chain runs to 509 residues: Solute carrier family 2, facilitated glucose transporter member 4 (509 aa).

At 1 to 24 (MPSGFQQIGSEDGEPPRQRVTGTL) the chain is on the cytoplasmic side. Residues 7 to 13 (QIGSEDG) form an interaction with SRFBP1 region. Serine 10 bears the Phosphoserine mark. The helical transmembrane segment at 25–45 (VLAVFSAVLGSLQFGYNIGVI) threads the bilayer. Over 46–81 (NAPQKVIEQSYNETWLGRQGPEGPGSIPPGTLTTLW) the chain is Extracellular. An N-linked (GlcNAc...) asparagine glycan is attached at asparagine 57. Residues 82-102 (ALSVAIFSVGGMISSFLIGII) traverse the membrane as a helical segment. The Cytoplasmic segment spans residues 103-111 (SQWLGRKRA). Residues 112 to 132 (MLFNNALAVLGGTLMGLAKAA) traverse the membrane as a helical segment. At 133 to 142 (ASYEMLILGR) the chain is on the extracellular side. Residues 143–163 (FFIGAYSGLTSGLVPMYVGEI) form a helical membrane-spanning segment. Over 164 to 171 (APTHLRGA) the chain is Cytoplasmic. A helical transmembrane segment spans residues 172–192 (LGTLNQLAIVTGILIAQVLGL). Glutamine 177 contributes to the D-glucose binding site. Residues 193-200 (ESMLGTAT) are Extracellular-facing. The chain crosses the membrane as a helical span at residues 201 to 221 (LWPLLLGITVLPALLQMVLLP). Residues 222–287 (LCPESPRYLY…LLGSHTHRQP (66 aa)) lie on the Cytoplasmic side of the membrane. Cysteine 223 carries the S-palmitoyl cysteine lipid modification. Serine 274 is subject to Phosphoserine; by SGK1. Residues 288–308 (LVIAIVLQLSQQLSGINAVFY) traverse the membrane as a helical segment. D-glucose is bound by residues 298–299 (QQ) and asparagine 304. The Extracellular segment spans residues 309-323 (YSTSIFESAGVEKPA). A helical membrane pass occupies residues 324–344 (YATIGAGVVNTVFTLVSVFLV). Asparagine 333 is a binding site for D-glucose. Residues 345 to 353 (ERAGRRTLH) lie on the Cytoplasmic side of the membrane. The chain crosses the membrane as a helical span at residues 354–374 (LLGLAGMCGCAILMTVALLLL). The Extracellular portion of the chain corresponds to 375 to 384 (ERVPAMSYVS). Residues 385–405 (IVAIFGFVAFFEIGPGPIPWF) form a helical membrane-spanning segment. Glutamate 396 and tryptophan 404 together coordinate D-glucose. The Cytoplasmic segment spans residues 406-417 (IVAELFSQGPRP). The helical transmembrane segment at 418–438 (AAMAVAGFSNWTCNFIIGMGF) threads the bilayer. Topologically, residues 439-445 (QYVADAM) are extracellular. The helical transmembrane segment at 446–466 (GPYVFLLFAVLLLGFFIFTFL) threads the bilayer. At 467 to 509 (KVPETRGRTFDQISAVFHRTPSLLEQEVKPSTELEYLGPDEHD) the chain is on the cytoplasmic side. At threonine 486 the chain carries Phosphothreonine. Serine 488 is modified (phosphoserine). The Dileucine internalization motif motif lies at 489–490 (LL).

It belongs to the major facilitator superfamily. Sugar transporter (TC 2.A.1.1) family. Glucose transporter subfamily. In terms of assembly, binds to DAXX. Interacts via its N-terminus with SRFBP1. Interacts with NDUFA9. Interacts with TRARG1; the interaction is required for proper SLC2A4 recycling after insulin stimulation. Sumoylated. Post-translationally, palmitoylated. Palmitoylation by ZDHHC7 controls the insulin-dependent translocation of GLUT4 to the plasma membrane.

It localises to the cell membrane. It is found in the endomembrane system. The protein localises to the cytoplasm. Its subcellular location is the perinuclear region. The enzyme catalyses D-glucose(out) = D-glucose(in). Its function is as follows. Insulin-regulated facilitative glucose transporter, which plays a key role in removal of glucose from circulation. Response to insulin is regulated by its intracellular localization: in the absence of insulin, it is efficiently retained intracellularly within storage compartments in muscle and fat cells. Upon insulin stimulation, translocates from these compartments to the cell surface where it transports glucose from the extracellular milieu into the cell. The protein is Solute carrier family 2, facilitated glucose transporter member 4 of Bos taurus (Bovine).